Here is a 399-residue protein sequence, read N- to C-terminus: Large envelope protein (399 aa).

The residue at position 1 (M1) is an N-acetylmethionine. A lipid anchor (N-myristoyl glycine; by host) is attached at G2. The pre-S1 stretch occupies residues 2–118 (GLSWTVPLEW…PPLRDTHPQA (117 aa)). The segment at 2 to 173 (GLSWTVPLEW…FSRIGDPAPN (172 aa)) is pre-S. Residues 2-180 (GLSWTVPLEW…APNMEGITSG (179 aa)) are Virion surface; in external conformation-facing. Residues 2-252 (GLSWTVPLEW…PGYRWMCLRR (251 aa)) lie on the Intravirion; in internal conformation side of the membrane. N-linked (GlcNAc...) asparagine glycosylation is present at S4. The disordered stretch occupies residues 85-109 (KTLPADPPPASTNRQSGRQPTPITP). Residues 95-105 (STNRQSGRQPT) show a composition bias toward polar residues. The interval 119–173 (MQWNSTTFHQALQDPRVRGLYFPAGGSSSGTVNPVPTTASLISSIFSRIGDPAPN) is pre-S2. Residues 181–201 (FLGPLLVLQAGFFLLTKILTI) form a helical membrane-spanning segment. Residues 202–252 (PQSLDSWWTSLNFLGGAPVCLGQNSQSPTSNHSPTSCPPICPGYRWMCLRR) are Intravirion; in external conformation-facing. A helical transmembrane segment spans residues 253–273 (FIIFLFILLLCLIFLLVLLGY). Topologically, residues 274–347 (QGMLPVCPLI…WASARFSWLS (74 aa)) are virion surface. An N-linked (GlcNAc...) asparagine; by host glycan is attached at N319. The chain crosses the membrane as a helical span at residues 348-368 (LLVPFVQWFAGLSPTVWLSVI). Residues 369 to 374 (WMMWYW) lie on the Intravirion side of the membrane. The helical transmembrane segment at 375–397 (GPSLYNILSPFIPLLPIFFCLWV) threads the bilayer. Residues 398 to 399 (YI) lie on the Virion surface side of the membrane.

It belongs to the orthohepadnavirus major surface antigen family. In its internal form (Li-HBsAg), interacts with the capsid protein and with the isoform S. Interacts with host chaperone CANX. In terms of assembly, associates with host chaperone CANX through its pre-S2 N glycan; this association may be essential for isoform M proper secretion. As to quaternary structure, interacts with isoform L. Interacts with the antigens of satellite virus HDV (HDVAgs); this interaction is required for encapsidation of HDV genomic RNA. Isoform M is N-terminally acetylated by host at a ratio of 90%, and N-glycosylated by host at the pre-S2 region. In terms of processing, myristoylated.

The protein localises to the virion membrane. Its function is as follows. The large envelope protein exists in two topological conformations, one which is termed 'external' or Le-HBsAg and the other 'internal' or Li-HBsAg. In its external conformation the protein attaches the virus to cell receptors and thereby initiating infection. This interaction determines the species specificity and liver tropism. This attachment induces virion internalization predominantly through caveolin-mediated endocytosis. The large envelope protein also assures fusion between virion membrane and endosomal membrane. In its internal conformation the protein plays a role in virion morphogenesis and mediates the contact with the nucleocapsid like a matrix protein. In terms of biological role, the middle envelope protein plays an important role in the budding of the virion. It is involved in the induction of budding in a nucleocapsid independent way. In this process the majority of envelope proteins bud to form subviral lipoprotein particles of 22 nm of diameter that do not contain a nucleocapsid. In Hepatitis B virus genotype E (isolate Cote d'Ivoire/ABI-129/2003) (HBV-E), this protein is Large envelope protein.